Consider the following 535-residue polypeptide: Suppressor of cytokine signaling 6 (535 aa).

Over residues 80 to 89 the composition is skewed to basic residues; sequence RLSAKQKSKG. The segment at 80–105 is disordered; it reads RLSAKQKSKGKAGTPSGSSADEDTFS. The 108-residue stretch at 384–491 folds into the SH2 domain; that stretch reads WYWGPITRWE…TYPVRLTNPV (108 aa). One can recognise an SOCS box domain in the interval 486–535; the sequence is RLTNPVSRFMQVRSLQYLCRFVIRQYTRIDLIQKLPLPNKMKDYLQEKHY.

In terms of assembly, interacts with RBCK1. Interacts with phosphorylated IRS4. Interacts with KIT (phosphorylated). Interacts with PIM3.

The protein operates within protein modification; protein ubiquitination. Its function is as follows. SOCS family proteins form part of a classical negative feedback system that regulates cytokine signal transduction. May be a substrate recognition component of a SCF-like ECS (Elongin BC-CUL2/5-SOCS-box protein) E3 ubiquitin-protein ligase complex which mediates the ubiquitination and subsequent proteasomal degradation of target proteins. Regulates KIT degradation by ubiquitination of the tyrosine-phosphorylated receptor. This is Suppressor of cytokine signaling 6 (SOCS6) from Pongo abelii (Sumatran orangutan).